The following is a 297-amino-acid chain: 3-mercaptopyruvate sulfurtransferase (297 aa).

At Ala-2 the chain carries N-acetylalanine. One can recognise a Rhodanese 1 domain in the interval 25–144 (SSQPLKLLDA…WLNQNLPISS (120 aa)). The residue at position 35 (Ser-35) is a Phosphoserine. Lys-40 is subject to N6-acetyllysine; alternate. Lys-40 bears the N6-succinyllysine; alternate mark. A hinge region spans residues 145–160 (GKSHSEPAEFSAQLDP). Lys-146 and Lys-164 each carry N6-succinyllysine. Residues 174–288 (DARRFQVVDA…WYMRAQPEHI (115 aa)) form the Rhodanese 2 domain. A substrate-binding site is contributed by Arg-188. Cys-248 functions as the Cysteine persulfide intermediate in the catalytic mechanism.

Monomer (active form). Homodimer; disulfide-linked (inactive form). In terms of tissue distribution, expressed in the brain and retina. In the retina, localized to the inner and outer plexiform layer, the inner and outer nuclear layer and the outer segments of photoreceptors. In the brain, localized to neurons of mitral cell layers, glomerular, and external plexiform layers in the olfactory bulb. Also found in Purkinje cell stomata and proximal dendrites. In the spinal cord, localized to large neurons. In the cerebral cortex, localized to pyramidial neurons in layers II/III and V, and in layers I-VI of neocortical areas. In the hippocampus, found in CA1 and CA3 pyramidal cells.

The protein localises to the cytoplasm. The protein resides in the mitochondrion. It is found in the synapse. Its subcellular location is the synaptosome. It catalyses the reaction 2-oxo-3-sulfanylpropanoate + [thioredoxin]-dithiol = [thioredoxin]-disulfide + hydrogen sulfide + pyruvate + H(+). By oxidative stress, and thioredoxin. Under oxidative stress conditions, the catalytic cysteine site is converted to a sulfenate which inhibits the MPST enzyme activity. Reduced thioredoxin cleaves an intersubunit disulfide bond to turn on the redox switch and reactivate the enzyme. Inhibited by different oxidants, hydrogen peroxide and tetrathionate. Transfer of a sulfur ion to cyanide or to other thiol compounds. Also has weak rhodanese activity. Detoxifies cyanide and is required for thiosulfate biosynthesis. Acts as an antioxidant. In combination with cysteine aminotransferase (CAT), contributes to the catabolism of cysteine and is an important producer of hydrogen sulfide in the brain, retina and vascular endothelial cells. Hydrogen sulfide H(2)S is an important synaptic modulator, signaling molecule, smooth muscle contractor and neuroprotectant. Its production by the 3MST/CAT pathway is regulated by calcium ions. This chain is 3-mercaptopyruvate sulfurtransferase (Mpst), found in Mus musculus (Mouse).